The following is a 387-amino-acid chain: 1-deoxy-D-xylulose 5-phosphate reductoisomerase (387 aa).

The NADPH site is built by Thr-11, Gly-12, Ser-13, Ile-14, Gly-37, Arg-38, Asn-39, and Asn-125. Lys-126 lines the 1-deoxy-D-xylulose 5-phosphate pocket. Position 127 (Glu-127) interacts with NADPH. Asp-151 serves as a coordination point for Mn(2+). Ser-152, Glu-153, Ser-177, and His-200 together coordinate 1-deoxy-D-xylulose 5-phosphate. Residue Glu-153 participates in Mn(2+) binding. Position 206 (Gly-206) interacts with NADPH. 1-deoxy-D-xylulose 5-phosphate-binding residues include Ser-213, Asn-218, Lys-219, and Glu-222. Glu-222 lines the Mn(2+) pocket.

This sequence belongs to the DXR family. Mg(2+) serves as cofactor. Mn(2+) is required as a cofactor.

The enzyme catalyses 2-C-methyl-D-erythritol 4-phosphate + NADP(+) = 1-deoxy-D-xylulose 5-phosphate + NADPH + H(+). It functions in the pathway isoprenoid biosynthesis; isopentenyl diphosphate biosynthesis via DXP pathway; isopentenyl diphosphate from 1-deoxy-D-xylulose 5-phosphate: step 1/6. Its function is as follows. Catalyzes the NADPH-dependent rearrangement and reduction of 1-deoxy-D-xylulose-5-phosphate (DXP) to 2-C-methyl-D-erythritol 4-phosphate (MEP). This is 1-deoxy-D-xylulose 5-phosphate reductoisomerase from Desulforamulus reducens (strain ATCC BAA-1160 / DSM 100696 / MI-1) (Desulfotomaculum reducens).